A 75-amino-acid chain; its full sequence is UPF0352 protein YejL (75 aa).

The protein belongs to the UPF0352 family.

The chain is UPF0352 protein YejL from Escherichia coli O127:H6 (strain E2348/69 / EPEC).